A 218-amino-acid polypeptide reads, in one-letter code: DNA endonuclease I-CeuI (218 aa).

Mg(2+)-binding residues include G65 and E66. Residues 71–75 (ISTKK) are interaction with DNA. D86 serves as a coordination point for Mg(2+). Interaction with DNA stretches follow at residues 90 to 94 (NVTQH), 114 to 116 (RHK), and 191 to 199 (KQQGQSNEG).

This sequence belongs to the LAGLIDADG endonuclease family. As to quaternary structure, homodimer. It depends on Mg(2+) as a cofactor.

The protein localises to the plastid. It localises to the chloroplast. Its function is as follows. Endonuclease involved in intron homing. Recognizes a degenerate sequence of 17-19 bp to produce a staggered cut 5 bp downstream from the CeLSU.5 intron insertion site. This Chlamydomonas moewusii (Chlamydomonas eugametos) protein is DNA endonuclease I-CeuI.